Here is an 87-residue protein sequence, read N- to C-terminus: Cytochrome c oxidase assembly factor 4 homolog, mitochondrial (87 aa).

Residues Met-1 to Gln-13 show a composition bias toward polar residues. The tract at residues Met-1 to Leu-25 is disordered. The region spanning Arg-31–Arg-72 is the CHCH domain. 2 short sequence motifs (cx9C motif) span residues Cys-34–Cys-44 and Cys-54–Cys-64. Intrachain disulfides connect Cys-34/Cys-64 and Cys-44/Cys-54. Residues Gln-68 to His-87 form a disordered region. A compositionally biased stretch (basic and acidic residues) spans Gln-69 to Glu-81.

The protein belongs to the COA4 family.

Its subcellular location is the mitochondrion. Functionally, putative COX assembly factor. This chain is Cytochrome c oxidase assembly factor 4 homolog, mitochondrial (COA4), found in Homo sapiens (Human).